The following is a 468-amino-acid chain: MTERAGLRLHDTAAGAVRDFVPLREGHVSIYLCGATVQGLPHIGHVRSGVAFDILRRWLMARGFDVAFIRNVTDIDDKILNKAAAAERPWWEWAATYERAFTAAYDALDVLPPSAEPRATGHVTQMVELIERLIERGHAYAGGGDVYFDVLSYPDYGQLSGHKVDDVHQGEGVATGKRDQRDFTLWKGAKPGEPSWPTPWGRGRPGWHLECSAMARTYLGAQFDIHCGGMDLIFPHHENEIAQSRAAGDGFARYWLHNGWVTMGGEKMSKSLGNVLAIPTMLQRVRPAELRYYLGSAHYRSILEFSDIALQDAVNAYVGVEEFLHRVRSRVGAVVVGDWTPRFAAALDDDLSVPIALAEIHHIRAEGNRALDAGDHDAALQSASSIRALMGILGCDPLDERWESRDETSAALAAVDVLVQAELENRQKAREERNWALADEIRNRLKNAGIEVTDTADGPQWLLGGDGK.

Zn(2+) is bound at residue C33. The short motif at 35–45 (ATVQGLPHIGH) is the 'HIGH' region element. Zn(2+) contacts are provided by C211, H236, and E240. Positions 267 to 271 (KMSKS) match the 'KMSKS' region motif. Residue K270 coordinates ATP.

It belongs to the class-I aminoacyl-tRNA synthetase family. As to quaternary structure, monomer. Zn(2+) is required as a cofactor.

The protein resides in the cytoplasm. It carries out the reaction tRNA(Cys) + L-cysteine + ATP = L-cysteinyl-tRNA(Cys) + AMP + diphosphate. This Mycobacterium ulcerans (strain Agy99) protein is Cysteine--tRNA ligase.